The sequence spans 888 residues: Leucine--tRNA ligase (888 aa).

The 'HIGH' region signature appears at 42-52 (PYPSGKLHMGH). Positions 640-644 (TMSKS) match the 'KMSKS' region motif. Lys-643 lines the ATP pocket.

The protein belongs to the class-I aminoacyl-tRNA synthetase family.

The protein resides in the cytoplasm. The catalysed reaction is tRNA(Leu) + L-leucine + ATP = L-leucyl-tRNA(Leu) + AMP + diphosphate. The sequence is that of Leucine--tRNA ligase from Polaromonas naphthalenivorans (strain CJ2).